We begin with the raw amino-acid sequence, 270 residues long: 2-C-methyl-D-erythritol 4-phosphate cytidylyltransferase (270 aa).

The segment at 1–33 is disordered; it reads MSDESRPSPAETPATTFAETSAETSAAGRSPAR. Over residues 7-27 the composition is skewed to low complexity; it reads PSPAETPATTFAETSAETSAA.

The protein belongs to the IspD/TarI cytidylyltransferase family. IspD subfamily.

It catalyses the reaction 2-C-methyl-D-erythritol 4-phosphate + CTP + H(+) = 4-CDP-2-C-methyl-D-erythritol + diphosphate. The protein operates within isoprenoid biosynthesis; isopentenyl diphosphate biosynthesis via DXP pathway; isopentenyl diphosphate from 1-deoxy-D-xylulose 5-phosphate: step 2/6. In terms of biological role, catalyzes the formation of 4-diphosphocytidyl-2-C-methyl-D-erythritol from CTP and 2-C-methyl-D-erythritol 4-phosphate (MEP). The protein is 2-C-methyl-D-erythritol 4-phosphate cytidylyltransferase of Streptomyces coelicolor (strain ATCC BAA-471 / A3(2) / M145).